Here is a 154-residue protein sequence, read N- to C-terminus: Transcriptional repressor NrdR (154 aa).

A zinc finger lies at 3-34 (CPFCRHPDSRVVDSREADEGQAIRRRRSCPEC). An ATP-cone domain is found at 46–136 (LAVVKRSGVT…VYRGFSSAED (91 aa)).

This sequence belongs to the NrdR family. Zn(2+) serves as cofactor.

In terms of biological role, negatively regulates transcription of bacterial ribonucleotide reductase nrd genes and operons by binding to NrdR-boxes. The chain is Transcriptional repressor NrdR from Mycobacteroides abscessus (strain ATCC 19977 / DSM 44196 / CCUG 20993 / CIP 104536 / JCM 13569 / NCTC 13031 / TMC 1543 / L948) (Mycobacterium abscessus).